We begin with the raw amino-acid sequence, 469 residues long: Phosphoenolpyruvate carboxylase (469 aa).

This sequence belongs to the PEPCase type 2 family. Homotetramer. It depends on Mg(2+) as a cofactor.

The enzyme catalyses oxaloacetate + phosphate = phosphoenolpyruvate + hydrogencarbonate. In terms of biological role, catalyzes the irreversible beta-carboxylation of phosphoenolpyruvate (PEP) to form oxaloacetate (OAA), a four-carbon dicarboxylic acid source for the tricarboxylic acid cycle. The protein is Phosphoenolpyruvate carboxylase of Pyrococcus abyssi (strain GE5 / Orsay).